The primary structure comprises 133 residues: Small ribosomal subunit protein uS8 (133 aa).

Belongs to the universal ribosomal protein uS8 family. As to quaternary structure, part of the 30S ribosomal subunit. Contacts proteins S5 and S12.

Its function is as follows. One of the primary rRNA binding proteins, it binds directly to 16S rRNA central domain where it helps coordinate assembly of the platform of the 30S subunit. The chain is Small ribosomal subunit protein uS8 from Chloroflexus aggregans (strain MD-66 / DSM 9485).